The primary structure comprises 196 residues: ATP-dependent Clp protease proteolytic subunit (196 aa).

Ser96 acts as the Nucleophile in catalysis. Residue His121 is part of the active site.

It belongs to the peptidase S14 family. As to quaternary structure, fourteen ClpP subunits assemble into 2 heptameric rings which stack back to back to give a disk-like structure with a central cavity, resembling the structure of eukaryotic proteasomes.

Its subcellular location is the cytoplasm. The enzyme catalyses Hydrolysis of proteins to small peptides in the presence of ATP and magnesium. alpha-casein is the usual test substrate. In the absence of ATP, only oligopeptides shorter than five residues are hydrolyzed (such as succinyl-Leu-Tyr-|-NHMec, and Leu-Tyr-Leu-|-Tyr-Trp, in which cleavage of the -Tyr-|-Leu- and -Tyr-|-Trp bonds also occurs).. Functionally, cleaves peptides in various proteins in a process that requires ATP hydrolysis. Has a chymotrypsin-like activity. Plays a major role in the degradation of misfolded proteins. This Streptococcus suis (strain 98HAH33) protein is ATP-dependent Clp protease proteolytic subunit.